The sequence spans 348 residues: Protein RecA (348 aa).

64–71 (GPESSGKT) provides a ligand contact to ATP. A compositionally biased stretch (basic and acidic residues) spans 325-335 (YEIDGANKEPL). Positions 325–348 (YEIDGANKEPLEETEETLSLLDDE) are disordered. A compositionally biased stretch (acidic residues) spans 336 to 348 (EETEETLSLLDDE).

This sequence belongs to the RecA family.

The protein resides in the cytoplasm. Functionally, can catalyze the hydrolysis of ATP in the presence of single-stranded DNA, the ATP-dependent uptake of single-stranded DNA by duplex DNA, and the ATP-dependent hybridization of homologous single-stranded DNAs. It interacts with LexA causing its activation and leading to its autocatalytic cleavage. The polypeptide is Protein RecA (Listeria welshimeri serovar 6b (strain ATCC 35897 / DSM 20650 / CCUG 15529 / CIP 8149 / NCTC 11857 / SLCC 5334 / V8)).